The sequence spans 123 residues: Large ribosomal subunit protein bL21 (123 aa).

It belongs to the bacterial ribosomal protein bL21 family. As to quaternary structure, part of the 50S ribosomal subunit. Contacts protein L20.

Its function is as follows. This protein binds to 23S rRNA in the presence of protein L20. In Sinorhizobium fredii (strain NBRC 101917 / NGR234), this protein is Large ribosomal subunit protein bL21.